Consider the following 194-residue polypeptide: Serine/threonine-protein kinase mos (194 aa).

A Protein kinase domain is found at 47-194 (LCLLNLLGSG…HLDLKPANIF (148 aa)). Residues 53-61 (LGSGGFGSV) and Lys-74 each bind ATP. Catalysis depends on Asp-187, which acts as the Proton acceptor.

This sequence belongs to the protein kinase superfamily. Ser/Thr protein kinase family.

It carries out the reaction L-seryl-[protein] + ATP = O-phospho-L-seryl-[protein] + ADP + H(+). The catalysed reaction is L-threonyl-[protein] + ATP = O-phospho-L-threonyl-[protein] + ADP + H(+). The sequence is that of Serine/threonine-protein kinase mos (MOS) from Dendroaspis angusticeps (Eastern green mamba).